A 297-amino-acid polypeptide reads, in one-letter code: MATLLSVRRARWRDYLELTKPKVVVLMLITSLAGMFLATRAGVSWSVLLFGNLGIGLCAGGAAVVNHVVDRRIDALMARTHKRPLAQGRVEPLPALLFALALALLGMVLLLVFTNALTAWLTLASLLGYAVLYTGFLKRATPQNIVIGGLAGAAPPLLGWVAVSGHVSAEPLLLVLIIFAWTPPHFWALAIHRKEEYAKADIPMLPVTHGERYTKLHILLYTLILLAVSLLPYAIHMSGPLYLACALGLGLRFLHWAWVLYRSSRPHAAIGTFKYSIGYLFALFIALLLDHYLLLSL.

A run of 9 helical transmembrane segments spans residues 23 to 43, 45 to 65, 93 to 113, 117 to 137, 145 to 165, 171 to 191, 216 to 236, 241 to 261, and 277 to 297; these read VVVL…RAGV, WSVL…AAVV, LPAL…LLVF, LTAW…TGFL, IVIG…AVSG, PLLL…ALAI, LHIL…YAIH, LYLA…WVLY, and IGYL…LLSL.

Belongs to the UbiA prenyltransferase family. Protoheme IX farnesyltransferase subfamily.

The protein resides in the cell inner membrane. It carries out the reaction heme b + (2E,6E)-farnesyl diphosphate + H2O = Fe(II)-heme o + diphosphate. Its pathway is porphyrin-containing compound metabolism; heme O biosynthesis; heme O from protoheme: step 1/1. Converts heme B (protoheme IX) to heme O by substitution of the vinyl group on carbon 2 of heme B porphyrin ring with a hydroxyethyl farnesyl side group. This is Protoheme IX farnesyltransferase 1 from Pseudomonas putida (strain ATCC 700007 / DSM 6899 / JCM 31910 / BCRC 17059 / LMG 24140 / F1).